Here is a 1173-residue protein sequence, read N- to C-terminus: WASH complex subunit 4 (1173 aa).

Residue Ala-2 is modified to N-acetylalanine. Residue Ser-7 is modified to Phosphoserine. Residues 27–56 (QLKNYGRFLEEYTSQLRRIEDALDDLIGDV) adopt a coiled-coil conformation. Residues 705–1173 (KDLALFFSLN…STVSADPVVK (469 aa)) are sufficient for interaction with WASHC5. The span at 1141-1155 (AEENQEKKEKEEETK) shows a compositional bias: basic and acidic residues. The tract at residues 1141-1173 (AEENQEKKEKEEETKTSNGDGPESTVSADPVVK) is disordered. At Thr-1154 the chain carries Phosphothreonine.

The protein belongs to the SWIP family. Component of the WASH core complex also described as WASH regulatory complex (SHRC) composed of WASH (WASHC1, WASH2P or WASH3P), WASHC2 (WASHC2A or WASHC2C), WASHC3, WASHC4 and WASHC5. The WASH core complex associates via WASHC2 with the F-actin-capping protein dimer (formed by CAPZA1, CAPZA2 or CAPZA3 and CAPZB) in a transient or substoichiometric manner which was initially described as WASH complex.

The protein localises to the early endosome. Acts as a component of the WASH core complex that functions as a nucleation-promoting factor (NPF) at the surface of endosomes, where it recruits and activates the Arp2/3 complex to induce actin polymerization, playing a key role in the fission of tubules that serve as transport intermediates during endosome sorting. The sequence is that of WASH complex subunit 4 from Mus musculus (Mouse).